Consider the following 265-residue polypeptide: uncharacterized protein (265 aa).

2 disordered regions span residues 21 to 53 and 78 to 133; these read TLTH…LGPH and HAPS…SSVS. Residues 90–101 are compositionally biased toward acidic residues; the sequence is DDDDDDEDDDDS. A compositionally biased stretch (low complexity) spans 114-123; that stretch reads SSSSSSSPRV. 137-144 serves as a coordination point for ATP; that stretch reads AILHQGKS.

This is an uncharacterized protein from Saccharomyces cerevisiae (strain ATCC 204508 / S288c) (Baker's yeast).